Here is a 223-residue protein sequence, read N- to C-terminus: 7-cyano-7-deazaguanine synthase (223 aa).

8–18 is a binding site for ATP; sequence MSGGMDSTLCA. Positions 187, 195, 198, and 201 each coordinate Zn(2+).

This sequence belongs to the QueC family. Zn(2+) serves as cofactor.

The catalysed reaction is 7-carboxy-7-deazaguanine + NH4(+) + ATP = 7-cyano-7-deazaguanine + ADP + phosphate + H2O + H(+). Its pathway is purine metabolism; 7-cyano-7-deazaguanine biosynthesis. Its function is as follows. Catalyzes the ATP-dependent conversion of 7-carboxy-7-deazaguanine (CDG) to 7-cyano-7-deazaguanine (preQ(0)). The protein is 7-cyano-7-deazaguanine synthase of Campylobacter curvus (strain 525.92).